A 338-amino-acid polypeptide reads, in one-letter code: Fructose-1,6-bisphosphatase class 1 1 (338 aa).

Mg(2+) contacts are provided by Glu88, Asp107, Leu109, and Asp110. Residues 110-113 and Asn196 contribute to the substrate site; that span reads DGSS. Glu268 lines the Mg(2+) pocket.

This sequence belongs to the FBPase class 1 family. In terms of assembly, homotetramer. Requires Mg(2+) as cofactor.

Its subcellular location is the cytoplasm. The enzyme catalyses beta-D-fructose 1,6-bisphosphate + H2O = beta-D-fructose 6-phosphate + phosphate. Its pathway is carbohydrate biosynthesis; Calvin cycle. The polypeptide is Fructose-1,6-bisphosphatase class 1 1 (Bradyrhizobium sp. (strain BTAi1 / ATCC BAA-1182)).